The following is a 328-amino-acid chain: L-lactate dehydrogenase (328 aa).

Residues Val-18, Glu-39, Lys-46, Tyr-71, and Gly-85–Ala-86 contribute to the NAD(+) site. 2 residues coordinate substrate: Gln-88 and Arg-94. Residues Ser-107, Ala-124 to Asn-126, and Ser-149 contribute to the NAD(+) site. Residue Asn-126–Asp-129 coordinates substrate. Position 154–157 (Asp-154–Arg-157) interacts with substrate. Residues Arg-159 and His-174 each coordinate beta-D-fructose 1,6-bisphosphate. The active-site Proton acceptor is His-181. The residue at position 226 (Tyr-226) is a Phosphotyrosine. Thr-235 contacts substrate.

It belongs to the LDH/MDH superfamily. LDH family. Homotetramer.

Its subcellular location is the cytoplasm. It catalyses the reaction (S)-lactate + NAD(+) = pyruvate + NADH + H(+). It functions in the pathway fermentation; pyruvate fermentation to lactate; (S)-lactate from pyruvate: step 1/1. Allosterically activated by fructose 1,6-bisphosphate (FBP). In terms of biological role, catalyzes the conversion of lactate to pyruvate. The polypeptide is L-lactate dehydrogenase (Streptococcus sanguinis (strain SK36)).